A 170-amino-acid chain; its full sequence is Translationally-controlled tumor protein homolog (170 aa).

Positions M1 to C170 constitute a TCTP domain.

The protein belongs to the TCTP family.

Its subcellular location is the cytoplasm. Involved in calcium binding and microtubule stabilization. This is Translationally-controlled tumor protein homolog (tpt1) from Scophthalmus maximus (Turbot).